The sequence spans 23 residues: Basic phospholipase A2 CB1 (23 aa).

As to quaternary structure, heterodimer of an acidic subunit and a basic chain. The acidic subunit is non-toxic, without enzymatic activity and comprises 3 peptides that are cross-linked by 7 disulfide bridges. The basic subunit is toxic, has phospholipase A2 activity and is composed of a single chain. Ca(2+) is required as a cofactor. Contains 7 disulfide bonds. Expressed by the venom gland.

It localises to the secreted. The enzyme catalyses a 1,2-diacyl-sn-glycero-3-phosphocholine + H2O = a 1-acyl-sn-glycero-3-phosphocholine + a fatty acid + H(+). Functionally, snake venom phospholipase A2 (PLA2) that shows presynaptic neurotoxicity. PLA2 catalyzes the calcium-dependent hydrolysis of the 2-acyl groups in 3-sn-phosphoglycerides. The polypeptide is Basic phospholipase A2 CB1 (Crotalus basiliscus (Mexican west-coast rattlesnake)).